The chain runs to 148 residues: Ribonuclease H (148 aa).

The RNase H type-1 domain occupies 1-142 (MSDSVEMFTD…ADQLANRGVD (142 aa)). Mg(2+)-binding residues include aspartate 10, glutamate 48, aspartate 70, and aspartate 134.

It belongs to the RNase H family. In terms of assembly, monomer. It depends on Mg(2+) as a cofactor.

It localises to the cytoplasm. The catalysed reaction is Endonucleolytic cleavage to 5'-phosphomonoester.. Functionally, endonuclease that specifically degrades the RNA of RNA-DNA hybrids. The polypeptide is Ribonuclease H (Pseudomonas putida (strain ATCC 700007 / DSM 6899 / JCM 31910 / BCRC 17059 / LMG 24140 / F1)).